A 474-amino-acid polypeptide reads, in one-letter code: Protein NAR1 (474 aa).

[4Fe-4S] cluster-binding residues include cysteine 24, cysteine 61, cysteine 64, cysteine 67, cysteine 177, cysteine 233, cysteine 390, and cysteine 394.

The protein belongs to the NARF family. As to quaternary structure, part of a complex composed of AE7, CIA1, MMS19 and NAR1. Interacts with CIA1. Expressed in developing tissues, including shoot apex, young leaves, vascular tissues, root tips, pedicels, carpels and developing seeds.

It is found in the nucleus. It localises to the cytoplasm. Its function is as follows. Essential component of the cytosolic iron-sulfur (Fe-S) protein assembly (CIA) machinery. Required for the maturation of extramitochondrial Fe/S proteins. Required for expression of the imprinted FWA gene, for seed development and is involved in the oxidative stress response in vegetative tissues. Involved in the regulation of cell size, ploidy and cell cycle progression. Required for growth under normoxic conditions and necessary for recovery after hypoxic treatment but its action is reactive oxygen species (ROS) independent. The polypeptide is Protein NAR1 (Arabidopsis thaliana (Mouse-ear cress)).